Here is a 350-residue protein sequence, read N- to C-terminus: Phenylalanine--tRNA ligase alpha subunit (350 aa).

Glu-262 is a binding site for Mg(2+).

This sequence belongs to the class-II aminoacyl-tRNA synthetase family. Phe-tRNA synthetase alpha subunit type 1 subfamily. In terms of assembly, tetramer of two alpha and two beta subunits. The cofactor is Mg(2+).

The protein localises to the cytoplasm. It catalyses the reaction tRNA(Phe) + L-phenylalanine + ATP = L-phenylalanyl-tRNA(Phe) + AMP + diphosphate + H(+). This chain is Phenylalanine--tRNA ligase alpha subunit (pheS), found in Thermus thermophilus (strain ATCC 27634 / DSM 579 / HB8).